Consider the following 279-residue polypeptide: Tryptophan synthase alpha chain (279 aa).

Active-site proton acceptor residues include Glu50 and Asp61.

This sequence belongs to the TrpA family. In terms of assembly, tetramer of two alpha and two beta chains.

It carries out the reaction (1S,2R)-1-C-(indol-3-yl)glycerol 3-phosphate + L-serine = D-glyceraldehyde 3-phosphate + L-tryptophan + H2O. It functions in the pathway amino-acid biosynthesis; L-tryptophan biosynthesis; L-tryptophan from chorismate: step 5/5. The alpha subunit is responsible for the aldol cleavage of indoleglycerol phosphate to indole and glyceraldehyde 3-phosphate. This Sinorhizobium fredii (strain NBRC 101917 / NGR234) protein is Tryptophan synthase alpha chain.